A 99-amino-acid chain; its full sequence is Aspartyl/glutamyl-tRNA(Asn/Gln) amidotransferase subunit C (99 aa).

This sequence belongs to the GatC family. As to quaternary structure, heterotrimer of A, B and C subunits.

It carries out the reaction L-glutamyl-tRNA(Gln) + L-glutamine + ATP + H2O = L-glutaminyl-tRNA(Gln) + L-glutamate + ADP + phosphate + H(+). It catalyses the reaction L-aspartyl-tRNA(Asn) + L-glutamine + ATP + H2O = L-asparaginyl-tRNA(Asn) + L-glutamate + ADP + phosphate + 2 H(+). Its function is as follows. Allows the formation of correctly charged Asn-tRNA(Asn) or Gln-tRNA(Gln) through the transamidation of misacylated Asp-tRNA(Asn) or Glu-tRNA(Gln) in organisms which lack either or both of asparaginyl-tRNA or glutaminyl-tRNA synthetases. The reaction takes place in the presence of glutamine and ATP through an activated phospho-Asp-tRNA(Asn) or phospho-Glu-tRNA(Gln). The polypeptide is Aspartyl/glutamyl-tRNA(Asn/Gln) amidotransferase subunit C (Mycobacterium marinum (strain ATCC BAA-535 / M)).